Consider the following 356-residue polypeptide: Butyrate kinase (356 aa).

The protein belongs to the acetokinase family.

The protein localises to the cytoplasm. The catalysed reaction is butanoate + ATP = butanoyl phosphate + ADP. The protein operates within lipid metabolism; butanoate metabolism. Its function is as follows. Catalyzes the conversion of butyryl-CoA through butyryl phosphate to butyrate. This chain is Butyrate kinase (buk), found in Clostridium perfringens (strain 13 / Type A).